The chain runs to 252 residues: Phosphoglycolate phosphatase (252 aa).

Aspartate 13 functions as the Nucleophile in the catalytic mechanism. Mg(2+) is bound by residues aspartate 13, aspartate 15, and aspartate 192.

Belongs to the HAD-like hydrolase superfamily. CbbY/CbbZ/Gph/YieH family. As to quaternary structure, monomer. Mg(2+) serves as cofactor. The cofactor is chloride.

The enzyme catalyses 2-phosphoglycolate + H2O = glycolate + phosphate. Its pathway is organic acid metabolism; glycolate biosynthesis; glycolate from 2-phosphoglycolate: step 1/1. In terms of biological role, specifically catalyzes the dephosphorylation of 2-phosphoglycolate. Is involved in the dissimilation of the intracellular 2-phosphoglycolate formed during the DNA repair of 3'-phosphoglycolate ends, a major class of DNA lesions induced by oxidative stress. In Salmonella paratyphi A (strain ATCC 9150 / SARB42), this protein is Phosphoglycolate phosphatase.